A 517-amino-acid chain; its full sequence is Protein AGENET DOMAIN (AGD)-CONTAINING P1 (517 aa).

The tract at residues 1-35 (MLRPRRSLGVSSPAKQRKKAAPKNSMATRANRKRL) is disordered. Plant Agenet, chromatin-binding regions lie at residues 37-111 (SYLK…PPMS) and 117-173 (KKIV…EWVD). Residues 177–202 (KPPLEETEEEEDESEEDKLDDSEDEE) form a disordered region. Residues 181-202 (EETEEEEDESEEDKLDDSEDEE) are compositionally biased toward acidic residues. Plant Agenet, chromatin-binding stretches follow at residues 219–287 (QMFS…PRDE), 289–345 (IDFA…DWVD), 378–446 (QAFS…LESV), and 449–505 (SPFE…EWID).

Expressed ubiquitously during vegetative stage, in meristems (e.g. root tips and shoot apical meristem), and in ovules and young seeds during reproductive stage.

Its subcellular location is the nucleus. Heterochromatin-binding protein that preferentially occupies long transposons and specifically recognizes the histone H3 'Lys-9' methylation (H3K9me) marks, with a stronger affinity for dimethylated H3K9 (H3K9me2). Required for transcriptional silencing, non-CG DNA methylation (e.g. CHG and CHH regions), and H3K9 dimethylation (H3K9me2) at some loci. Mediates heterochromatin phase separation and chromocenter formation. The chain is Protein AGENET DOMAIN (AGD)-CONTAINING P1 from Arabidopsis thaliana (Mouse-ear cress).